The sequence spans 233 residues: Large ribosomal subunit protein uL1 (233 aa).

This sequence belongs to the universal ribosomal protein uL1 family. Part of the 50S ribosomal subunit.

In terms of biological role, binds directly to 23S rRNA. The L1 stalk is quite mobile in the ribosome, and is involved in E site tRNA release. Functionally, protein L1 is also a translational repressor protein, it controls the translation of the L11 operon by binding to its mRNA. The sequence is that of Large ribosomal subunit protein uL1 from Laribacter hongkongensis (strain HLHK9).